The chain runs to 63 residues: Small ribosomal subunit protein eS31 (63 aa).

Positions 34, 37, 53, and 56 each coordinate Zn(2+). Residues 34-56 (CPKCGSVMAFHREPVPRWHCGKC) form a C4-type zinc finger.

The protein belongs to the eukaryotic ribosomal protein eS31 family. In terms of assembly, part of the 30S ribosomal subunit. Requires Zn(2+) as cofactor.

This Pyrobaculum neutrophilum (strain DSM 2338 / JCM 9278 / NBRC 100436 / V24Sta) (Thermoproteus neutrophilus) protein is Small ribosomal subunit protein eS31.